The chain runs to 433 residues: Phosphomethylpyrimidine synthase 1 (433 aa).

Substrate is bound by residues Met-95, Tyr-124, His-163, 185-187, 226-229, and Glu-265; these read SRG and NAMR. His-269 lines the Zn(2+) pocket. Substrate is bound at residue Tyr-292. His-333 contacts Zn(2+). The [4Fe-4S] cluster site is built by Cys-408, Cys-411, and Cys-415.

This sequence belongs to the ThiC family. The cofactor is [4Fe-4S] cluster.

It catalyses the reaction 5-amino-1-(5-phospho-beta-D-ribosyl)imidazole + S-adenosyl-L-methionine = 4-amino-2-methyl-5-(phosphooxymethyl)pyrimidine + CO + 5'-deoxyadenosine + formate + L-methionine + 3 H(+). It participates in cofactor biosynthesis; thiamine diphosphate biosynthesis. Functionally, catalyzes the synthesis of the hydroxymethylpyrimidine phosphate (HMP-P) moiety of thiamine from aminoimidazole ribotide (AIR) in a radical S-adenosyl-L-methionine (SAM)-dependent reaction. The chain is Phosphomethylpyrimidine synthase 1 from Methanothermobacter thermautotrophicus (strain ATCC 29096 / DSM 1053 / JCM 10044 / NBRC 100330 / Delta H) (Methanobacterium thermoautotrophicum).